Here is a 134-residue protein sequence, read N- to C-terminus: Putative pre-16S rRNA nuclease (134 aa).

This sequence belongs to the YqgF nuclease family.

It localises to the cytoplasm. Functionally, could be a nuclease involved in processing of the 5'-end of pre-16S rRNA. The polypeptide is Putative pre-16S rRNA nuclease (Helicobacter pylori (strain P12)).